We begin with the raw amino-acid sequence, 193 residues long: 3-isopropylmalate dehydratase small subunit (193 aa).

The protein belongs to the LeuD family. LeuD type 1 subfamily. Heterodimer of LeuC and LeuD.

The enzyme catalyses (2R,3S)-3-isopropylmalate = (2S)-2-isopropylmalate. The protein operates within amino-acid biosynthesis; L-leucine biosynthesis; L-leucine from 3-methyl-2-oxobutanoate: step 2/4. Its function is as follows. Catalyzes the isomerization between 2-isopropylmalate and 3-isopropylmalate, via the formation of 2-isopropylmaleate. This chain is 3-isopropylmalate dehydratase small subunit, found in Bacillus cytotoxicus (strain DSM 22905 / CIP 110041 / 391-98 / NVH 391-98).